Consider the following 90-residue polypeptide: Large ribosomal subunit protein bL27 (90 aa).

The interval 1–22 is disordered; the sequence is MAHKKAGGSTRNGRDSNPKMLG.

The protein belongs to the bacterial ribosomal protein bL27 family.

The chain is Large ribosomal subunit protein bL27 from Coxiella burnetii (strain Dugway 5J108-111).